We begin with the raw amino-acid sequence, 607 residues long: UvrABC system protein C (607 aa).

The region spanning Gly16–Ile94 is the GIY-YIG domain. The UVR domain maps to Asn203–Val238.

It belongs to the UvrC family. As to quaternary structure, interacts with UvrB in an incision complex.

It is found in the cytoplasm. The UvrABC repair system catalyzes the recognition and processing of DNA lesions. UvrC both incises the 5' and 3' sides of the lesion. The N-terminal half is responsible for the 3' incision and the C-terminal half is responsible for the 5' incision. The protein is UvrABC system protein C of Pseudomonas syringae pv. tomato (strain ATCC BAA-871 / DC3000).